Reading from the N-terminus, the 100-residue chain is Co-chaperonin GroES (100 aa).

This sequence belongs to the GroES chaperonin family. As to quaternary structure, heptamer of 7 subunits arranged in a ring. Interacts with the chaperonin GroEL.

It localises to the cytoplasm. Its function is as follows. Together with the chaperonin GroEL, plays an essential role in assisting protein folding. The GroEL-GroES system forms a nano-cage that allows encapsulation of the non-native substrate proteins and provides a physical environment optimized to promote and accelerate protein folding. GroES binds to the apical surface of the GroEL ring, thereby capping the opening of the GroEL channel. The protein is Co-chaperonin GroES of Mycobacterium leprae (strain Br4923).